Consider the following 179-residue polypeptide: Acireductone dioxygenase (179 aa).

Residues His-99, His-101, Glu-105, and His-144 each coordinate Fe(2+). Ni(2+) is bound by residues His-99, His-101, Glu-105, and His-144.

This sequence belongs to the acireductone dioxygenase (ARD) family. Monomer. The cofactor is Fe(2+). It depends on Ni(2+) as a cofactor.

The enzyme catalyses 1,2-dihydroxy-5-(methylsulfanyl)pent-1-en-3-one + O2 = 3-(methylsulfanyl)propanoate + CO + formate + 2 H(+). It carries out the reaction 1,2-dihydroxy-5-(methylsulfanyl)pent-1-en-3-one + O2 = 4-methylsulfanyl-2-oxobutanoate + formate + 2 H(+). It functions in the pathway amino-acid biosynthesis; L-methionine biosynthesis via salvage pathway; L-methionine from S-methyl-5-thio-alpha-D-ribose 1-phosphate: step 5/6. Its function is as follows. Catalyzes 2 different reactions between oxygen and the acireductone 1,2-dihydroxy-3-keto-5-methylthiopentene (DHK-MTPene) depending upon the metal bound in the active site. Fe-containing acireductone dioxygenase (Fe-ARD) produces formate and 2-keto-4-methylthiobutyrate (KMTB), the alpha-ketoacid precursor of methionine in the methionine recycle pathway. Ni-containing acireductone dioxygenase (Ni-ARD) produces methylthiopropionate, carbon monoxide and formate, and does not lie on the methionine recycle pathway. In Exiguobacterium sibiricum (strain DSM 17290 / CCUG 55495 / CIP 109462 / JCM 13490 / 255-15), this protein is Acireductone dioxygenase.